A 220-amino-acid chain; its full sequence is Ribose-5-phosphate isomerase A (220 aa).

Substrate contacts are provided by residues Thr25–Thr28, Asp80–Asp83, and Lys93–Gly96. The active-site Proton acceptor is the Glu102. Lys120 contributes to the substrate binding site.

The protein belongs to the ribose 5-phosphate isomerase family. In terms of assembly, homodimer.

It catalyses the reaction aldehydo-D-ribose 5-phosphate = D-ribulose 5-phosphate. It functions in the pathway carbohydrate degradation; pentose phosphate pathway; D-ribose 5-phosphate from D-ribulose 5-phosphate (non-oxidative stage): step 1/1. Catalyzes the reversible conversion of ribose-5-phosphate to ribulose 5-phosphate. In Bacillus cereus (strain ATCC 10987 / NRS 248), this protein is Ribose-5-phosphate isomerase A.